The chain runs to 98 residues: Small ribosomal subunit protein eS24 (98 aa).

A disordered region spans residues 76-98 (GRQRTERSYLLNRGEPKKEEEEA). A compositionally biased stretch (basic and acidic residues) spans 89–98 (GEPKKEEEEA).

It belongs to the eukaryotic ribosomal protein eS24 family.

The chain is Small ribosomal subunit protein eS24 from Methanosphaerula palustris (strain ATCC BAA-1556 / DSM 19958 / E1-9c).